Consider the following 117-residue polypeptide: cAMP-regulated phosphoprotein 19-B (117 aa).

Positions Met1–Leu37 are enriched in basic and acidic residues. The interval Met1–Leu54 is disordered. Ser28 carries the post-translational modification Phosphoserine; by CDK2. Ser67 carries the phosphoserine; by GWL modification. Positions Met77 to Gly117 are disordered. At Thr99 the chain carries Phosphothreonine; by CDK2. Residue Ser109 is modified to Phosphoserine; by PKA.

It belongs to the endosulfine family. As to quaternary structure, interacts (when phosphorylated at Ser-67) with ppp2r2d. In terms of processing, phosphorylation at Ser-67 by gwl during mitosis is essential for interaction with ppp2r2d (PR55-delta) and subsequent inactivation of PP2A.

It localises to the cytoplasm. Functionally, protein phosphatase inhibitor that specifically inhibits protein phosphatase 2A (PP2A) during mitosis. When phosphorylated at Ser-67 during mitosis, specifically interacts with ppp2r2d (PR55-delta) and inhibits its activity, leading to inactivation of PP2A, an essential condition to keep cyclin-B1-CDK1 activity high during M phase. The polypeptide is cAMP-regulated phosphoprotein 19-B (arpp19-b) (Xenopus laevis (African clawed frog)).